The following is a 246-amino-acid chain: MPALSGPQYLGEGLKLIMRPGLRLFVLIPLTLNLLVFALLIGFAMQQFSHWVDLLMPSLPDWLSFLQYIVWPLFVLLVLVIVFFTFTMVANIISAPFNGFLSEKVEVVVRGRDDFPPFSWAELLAMIPRTMGREMRKLAYFLPRALVLLVLSFVPGVNLIATPLWILFGIWMMAVQYIDYPADNHKLGWNEMLAWLRSKRWACMGFGGVTYLALLIPLVNLVMMPAAVAGATLFWVREEGERALVK.

A run of 4 helical transmembrane segments spans residues 24 to 44, 69 to 89, 148 to 168, and 214 to 234; these read LFVL…IGFA, IVWP…FTMV, LLVL…WILF, and LLIP…ATLF.

The protein belongs to the CysZ family.

Its subcellular location is the cell inner membrane. High affinity, high specificity proton-dependent sulfate transporter, which mediates sulfate uptake. Provides the sulfur source for the cysteine synthesis pathway. The chain is Sulfate transporter CysZ from Pseudomonas aeruginosa (strain ATCC 15692 / DSM 22644 / CIP 104116 / JCM 14847 / LMG 12228 / 1C / PRS 101 / PAO1).